Consider the following 342-residue polypeptide: Holliday junction branch migration complex subunit RuvB (342 aa).

The segment at 1–181 (MENRMVTPFD…FGMLCAMEFY (181 aa)) is large ATPase domain (RuvB-L). ATP is bound by residues Leu20, Arg21, Gly62, Lys65, Thr66, Thr67, 128–130 (EDY), Arg171, Tyr181, and Arg218. Thr66 serves as a coordination point for Mg(2+). The tract at residues 182-252 (TDEELMEIVV…GAKAALDLLE (71 aa)) is small ATPAse domain (RuvB-S). The interval 255 to 342 (KEGLDKIDNK…KDNQVSIFNK (88 aa)) is head domain (RuvB-H). Residues Arg310 and Arg315 each contribute to the DNA site.

Belongs to the RuvB family. As to quaternary structure, homohexamer. Forms an RuvA(8)-RuvB(12)-Holliday junction (HJ) complex. HJ DNA is sandwiched between 2 RuvA tetramers; dsDNA enters through RuvA and exits via RuvB. An RuvB hexamer assembles on each DNA strand where it exits the tetramer. Each RuvB hexamer is contacted by two RuvA subunits (via domain III) on 2 adjacent RuvB subunits; this complex drives branch migration. In the full resolvosome a probable DNA-RuvA(4)-RuvB(12)-RuvC(2) complex forms which resolves the HJ.

It is found in the cytoplasm. It catalyses the reaction ATP + H2O = ADP + phosphate + H(+). The RuvA-RuvB-RuvC complex processes Holliday junction (HJ) DNA during genetic recombination and DNA repair, while the RuvA-RuvB complex plays an important role in the rescue of blocked DNA replication forks via replication fork reversal (RFR). RuvA specifically binds to HJ cruciform DNA, conferring on it an open structure. The RuvB hexamer acts as an ATP-dependent pump, pulling dsDNA into and through the RuvAB complex. RuvB forms 2 homohexamers on either side of HJ DNA bound by 1 or 2 RuvA tetramers; 4 subunits per hexamer contact DNA at a time. Coordinated motions by a converter formed by DNA-disengaged RuvB subunits stimulates ATP hydrolysis and nucleotide exchange. Immobilization of the converter enables RuvB to convert the ATP-contained energy into a lever motion, pulling 2 nucleotides of DNA out of the RuvA tetramer per ATP hydrolyzed, thus driving DNA branch migration. The RuvB motors rotate together with the DNA substrate, which together with the progressing nucleotide cycle form the mechanistic basis for DNA recombination by continuous HJ branch migration. Branch migration allows RuvC to scan DNA until it finds its consensus sequence, where it cleaves and resolves cruciform DNA. This Clostridium botulinum (strain 657 / Type Ba4) protein is Holliday junction branch migration complex subunit RuvB.